We begin with the raw amino-acid sequence, 523 residues long: Putative oxidoreductase TDA3 (523 aa).

Positions 157–172 (NSSLSSSGSSLKNDSA) are enriched in low complexity. The tract at residues 157 to 189 (NSSLSSSGSSLKNDSASNEEEGSDIHVSSSVPS) is disordered. Phosphoserine occurs at positions 189, 204, and 306.

Belongs to the TDA3 family. As to quaternary structure, interacts with BTN2.

Its subcellular location is the cytoplasm. The protein localises to the late endosome. Its function is as follows. Putative oxidoreductase that negatively regulates the retrieval of cargo from late endosomes to the Golgi. Regulates YIF1 and KEX2 localization. Required for fast DNA replication. The sequence is that of Putative oxidoreductase TDA3 (TDA3) from Saccharomyces cerevisiae (strain ATCC 204508 / S288c) (Baker's yeast).